The sequence spans 456 residues: Gamma-aminobutyric acid receptor subunit alpha-1 (456 aa).

The N-terminal stretch at 1–27 is a signal peptide; it reads MRKSPGLSDCLWAWILLLSTLTGRSYG. At 28 to 253 the chain is on the extracellular side; sequence QPSLQDELKD…FHLKRKIGYF (226 aa). N-linked (GlcNAc...) asparagine glycosylation occurs at Asn38. Residue Arg94 coordinates 4-aminobutanoate. Residue Asn138 is glycosylated (N-linked (GlcNAc...) asparagine). Thr157 provides a ligand contact to 4-aminobutanoate. Cysteines 166 and 180 form a disulfide. The helical transmembrane segment at 254–274 threads the bilayer; the sequence is VIQTYLPCIMTVILSQVSFWL. Topologically, residues 275-279 are cytoplasmic; the sequence is NRESV. A helical transmembrane segment spans residues 280–301; sequence PARTVFGVTTVLTMTTLSISAR. The Extracellular segment spans residues 302-311; the sequence is NSLPKVAYAT. A helical membrane pass occupies residues 312–333; that stretch reads AMDWFIAVCYAFVFSALIEFAT. The Cytoplasmic portion of the chain corresponds to 334–421; sequence VNYFTKRGYA…TFNSVSKIDR (88 aa). Residues 422 to 441 traverse the membrane as a helical segment; it reads LSRIAFPLLFGIFNLIYWAT. Residues 442–456 lie on the Extracellular side of the membrane; the sequence is YLNREPQLKAPTPHQ.

It belongs to the ligand-gated ion channel (TC 1.A.9) family. Gamma-aminobutyric acid receptor (TC 1.A.9.5) subfamily. GABRA1 sub-subfamily. In terms of assembly, heteropentamer, formed by a combination of alpha (GABRA1-6), beta (GABRB1-3), gamma (GABRG1-3), delta (GABRD), epsilon (GABRE), rho (GABRR1-3), pi (GABRP) and theta (GABRQ) subunits, each subunit exhibiting distinct physiological and pharmacological properties. Interacts with UBQLN1. Interacts with TRAK1. Interacts with KIF21B. Identified in a complex of 720 kDa composed of LHFPL4, NLGN2, GABRA1, GABRB2, GABRG2 and GABRB3. Interacts with LHFPL4. Interacts with NLGN2. Interacts with SHISA7; interaction leads to the regulation of GABA(A) receptor trafficking, channel deactivation kinetics and pharmacology.

The protein resides in the postsynaptic cell membrane. It is found in the cell membrane. Its subcellular location is the cytoplasmic vesicle membrane. The catalysed reaction is chloride(in) = chloride(out). Its activity is regulated as follows. Allosterically activated by benzodiazepines, the neuroanesthetic alphaxalone and pentobarbital. Inhibited by the antagonist bicuculline. Potentiated by histamine. Functionally, alpha subunit of the heteropentameric ligand-gated chloride channel gated by gamma-aminobutyric acid (GABA), a major inhibitory neurotransmitter in the brain. GABA-gated chloride channels, also named GABA(A) receptors (GABAAR), consist of five subunits arranged around a central pore and contain GABA active binding site(s) located at the alpha and beta subunit interface(s). When activated by GABA, GABAARs selectively allow the flow of chloride anions across the cell membrane down their electrochemical gradient. Alpha-1/GABRA1-containing GABAARs are largely synaptic. Chloride influx into the postsynaptic neuron following GABAAR opening decreases the neuron ability to generate a new action potential, thereby reducing nerve transmission. GABAARs containing alpha-1 and beta-2 or -3 subunits exhibit synaptogenic activity; the gamma-2 subunit being necessary but not sufficient to induce rapid synaptic contacts formation. GABAARs function also as histamine receptor where histamine binds at the interface of two neighboring beta subunits and potentiates GABA response. GABAARs containing alpha, beta and epsilon subunits also permit spontaneous chloride channel activity while preserving the structural information required for GABA-gated openings. Alpha-1-mediated plasticity in the orbitofrontal cortex regulates context-dependent action selection. Together with rho subunits, may also control neuronal and glial GABAergic transmission in the cerebellum. The chain is Gamma-aminobutyric acid receptor subunit alpha-1 (GABRA1) from Pongo abelii (Sumatran orangutan).